We begin with the raw amino-acid sequence, 355 residues long: Protein RecA (355 aa).

Residue 73-80 (GPESSGKT) participates in ATP binding.

Belongs to the RecA family.

The protein resides in the cytoplasm. Can catalyze the hydrolysis of ATP in the presence of single-stranded DNA, the ATP-dependent uptake of single-stranded DNA by duplex DNA, and the ATP-dependent hybridization of homologous single-stranded DNAs. It interacts with LexA causing its activation and leading to its autocatalytic cleavage. This chain is Protein RecA, found in Solidesulfovibrio magneticus (strain ATCC 700980 / DSM 13731 / RS-1) (Desulfovibrio magneticus).